The primary structure comprises 371 residues: Putative transport protein YtvI (371 aa).

9 helical membrane passes run 6–26, 30–50, 65–85, 168–188, 225–245, 256–276, 283–303, 312–332, and 334–354; these read ITIFFRTLFVISMTAGSIAAA, FPLTYPFLIALILSSVIHPVV, VLGVLAFFLLAAFGVLTILVA, FFALLPNTAAVLIFSLLATFF, GFIKAQAVLVFITMVIVFIGL, IAFLIGLVDLLPYLGAGSVFV, SITGQLPQAIGIGILYLVVLI, ILSKSIGIDPLATLIALFAGF, and LFGFLGLIAGPAVLVIIQAFI.

It belongs to the autoinducer-2 exporter (AI-2E) (TC 2.A.86) family.

Its subcellular location is the cell membrane. This Bacillus subtilis (strain 168) protein is Putative transport protein YtvI (ytvI).